A 1073-amino-acid chain; its full sequence is Collagen alpha-2(I) chain (1073 aa).

The segment at 1-939 is disordered; that stretch reads APDPGPGPMG…PGPAGGGYDV (939 aa). Low complexity-rich tracts occupy residues 100–148, 178–187, and 194–215; these read EPGA…AAGP, EPGPNGAVGP, and PGNNGLNGAKGAAGTPGVAGAP. The span at 217-227 shows a compositional bias: pro residues; that stretch reads FPGPRGGPGPQ. The span at 229–239 shows a compositional bias: low complexity; it reads PQGAAGQRGLA. Over residues 246–255 the composition is skewed to gly residues; it reads GVKGDGGPKG. 4 stretches are compositionally biased toward low complexity: residues 296–315, 321–348, 386–399, and 411–423; these read MPGARGATGAAGPRGPPGDA, SGPAGLRGLPGSPGSSGPPGKEGAAGPA, APGPDGNNGATGAT, and QGAAGAPGFQGLP. Residues 424–433 show a composition bias toward gly residues; that stretch reads GPAGGAGEAG. Over residues 458-468 the composition is skewed to low complexity; that stretch reads NPGAAGASGPQ. The segment covering 481 to 508 has biased composition (gly residues); it reads GTDGGKGEPGAAGAAGGPGHQGPGGMPG. The segment covering 519–530 has biased composition (basic and acidic residues); it reads KGEKGEAGHRGP. Composition is skewed to low complexity over residues 561–575 and 584–597; these read SGSFGPAGPAGARGA and PAGAPGFAGPPGAD. Over residues 607 to 616 the composition is skewed to gly residues; that stretch reads GPSGGKGESG. Low complexity-rich tracts occupy residues 617–642, 653–680, and 708–729; these read PAGPAGPAGQSGPPGASGPAGPTGAR, FPGAAGRVGAAGPAGLVGPPGSAGPAGK, and SGEKGPSGPAGXPGXPGTSGPL. Positions 745–757 are enriched in gly residues; the sequence is GSPGGAGGVGEPG. Low complexity predominate over residues 758–774; that stretch reads RVGPAGPAGARGNLGLP. Over residues 811–820 the composition is skewed to gly residues; that stretch reads GESGPGGAAG. The segment covering 821–836 has biased composition (low complexity); the sequence is AVGPAGARGAAGPSGP. Over residues 837–851 the composition is skewed to basic and acidic residues; the sequence is RGEKGVAGEKGERGL. 2 stretches are compositionally biased toward low complexity: residues 857-876 and 906-917; these read LQGMPGPSGPSGDTGSAGPN and PGARGPPGYVGP. Positions 918 to 932 are enriched in pro residues; it reads AGPPGSPGLPGPPGP. The Fibrillar collagen NC1 domain maps to 1039 to 1073; sequence RTNKPSRLPLLDLAPLDLGGADQEFGLDLGPVCFK.

This sequence belongs to the fibrillar collagen family.

It is found in the secreted. The protein localises to the extracellular space. It localises to the extracellular matrix. The sequence is that of Collagen alpha-2(I) chain from Epinephelus aeneus (White grouper).